A 316-amino-acid chain; its full sequence is Acetyl-coenzyme A carboxylase carboxyl transferase subunit alpha (316 aa).

In terms of domain architecture, CoA carboxyltransferase C-terminal spans Arg-39–Met-293.

The protein belongs to the AccA family. In terms of assembly, acetyl-CoA carboxylase is a heterohexamer composed of biotin carboxyl carrier protein (AccB), biotin carboxylase (AccC) and two subunits each of ACCase subunit alpha (AccA) and ACCase subunit beta (AccD).

It localises to the cytoplasm. The enzyme catalyses N(6)-carboxybiotinyl-L-lysyl-[protein] + acetyl-CoA = N(6)-biotinyl-L-lysyl-[protein] + malonyl-CoA. Its pathway is lipid metabolism; malonyl-CoA biosynthesis; malonyl-CoA from acetyl-CoA: step 1/1. Component of the acetyl coenzyme A carboxylase (ACC) complex. First, biotin carboxylase catalyzes the carboxylation of biotin on its carrier protein (BCCP) and then the CO(2) group is transferred by the carboxyltransferase to acetyl-CoA to form malonyl-CoA. This chain is Acetyl-coenzyme A carboxylase carboxyl transferase subunit alpha, found in Stutzerimonas stutzeri (strain A1501) (Pseudomonas stutzeri).